The sequence spans 52 residues: uncharacterized protein (52 aa).

The next 2 helical transmembrane spans lie at 4 to 24 (IIIP…ISLE) and 25 to 45 (MSIV…FLFV).

Its subcellular location is the cell membrane. This is an uncharacterized protein from Bacillus subtilis (strain 168).